Here is a 263-residue protein sequence, read N- to C-terminus: 4-hydroxy-2-oxo-heptane-1,7-dioate aldolase (263 aa).

Catalysis depends on His45, which acts as the Proton acceptor. Gln147 is a substrate binding site. Glu149 is a binding site for a divalent metal cation. The substrate site is built by Ala174 and Asp175. Asp175 contacts a divalent metal cation.

Belongs to the HpcH/HpaI aldolase family. In terms of assembly, homohexamer; trimer of dimers. A divalent metal cation serves as cofactor.

It catalyses the reaction 4-hydroxy-2-oxoheptanedioate = succinate semialdehyde + pyruvate. The protein operates within aromatic compound metabolism; 4-hydroxyphenylacetate degradation; pyruvate and succinate semialdehyde from 4-hydroxyphenylacetate: step 7/7. In terms of biological role, catalyzes the reversible retro-aldol cleavage of 4-hydroxy-2-ketoheptane-1,7-dioate (HKHD) to pyruvate and succinic semialdehyde. This is 4-hydroxy-2-oxo-heptane-1,7-dioate aldolase from Salmonella choleraesuis (strain SC-B67).